The primary structure comprises 283 residues: HTH-type transcriptional activator RhaR (283 aa).

Residues 179 to 277 form the HTH araC/xylS-type domain; it reads DLLMAALGNS…GVTPRVWRQQ (99 aa). 2 DNA-binding regions (H-T-H motif) span residues 196–217 and 244–267; these read QHFCSHYQIAERPLRQLFRQQT and ISEIAARCGFEDSNYFSVVFTRET.

As to quaternary structure, binds DNA as a dimer.

Its subcellular location is the cytoplasm. Activates expression of the rhaSR operon in response to L-rhamnose. The polypeptide is HTH-type transcriptional activator RhaR (Cronobacter sakazakii (strain ATCC BAA-894) (Enterobacter sakazakii)).